The following is a 475-amino-acid chain: Ribulose bisphosphate carboxylase large chain (475 aa).

Positions 1–2 are excised as a propeptide; sequence MS. The residue at position 3 (Pro3) is an N-acetylproline. Lys14 carries the post-translational modification N6,N6,N6-trimethyllysine. Substrate-binding residues include Asn123 and Thr173. Lys175 acts as the Proton acceptor in catalysis. Lys177 contacts substrate. Mg(2+)-binding residues include Lys201, Asp203, and Glu204. Lys201 carries the N6-carboxylysine modification. His294 (proton acceptor) is an active-site residue. 3 residues coordinate substrate: Arg295, His327, and Ser379.

This sequence belongs to the RuBisCO large chain family. Type I subfamily. Heterohexadecamer of 8 large chains and 8 small chains; disulfide-linked. The disulfide link is formed within the large subunit homodimers. The cofactor is Mg(2+). In terms of processing, the disulfide bond which can form in the large chain dimeric partners within the hexadecamer appears to be associated with oxidative stress and protein turnover.

Its subcellular location is the plastid. It localises to the chloroplast. It carries out the reaction 2 (2R)-3-phosphoglycerate + 2 H(+) = D-ribulose 1,5-bisphosphate + CO2 + H2O. The catalysed reaction is D-ribulose 1,5-bisphosphate + O2 = 2-phosphoglycolate + (2R)-3-phosphoglycerate + 2 H(+). In terms of biological role, ruBisCO catalyzes two reactions: the carboxylation of D-ribulose 1,5-bisphosphate, the primary event in carbon dioxide fixation, as well as the oxidative fragmentation of the pentose substrate in the photorespiration process. Both reactions occur simultaneously and in competition at the same active site. The sequence is that of Ribulose bisphosphate carboxylase large chain from Equisetum arvense (Field horsetail).